Reading from the N-terminus, the 385-residue chain is MLCWELANRRKRIGPNRFGFPIAILTRQQLIEVLYTALSDKSKVKTGKKVVRIESEERRITTWTEDGSEYEGELVVGADGVHSVTRSEMWRAADNQQPGFIQEEEKYSLSAEYSCIWGLSTPVPGIRQGEQIIRSYDRLTFLIFPSQNGCLGWFAIQKLNRKHVYPDIRPFSQKDTLARCEALRDLPIWNDVKFGDLLTLTEVCAMTPLEENLFQTWNYGRILCIGDSISKLTPNIAQGANTAIEGAAAVANGLHQLLHHNGLNQPSYDEIQEVLGRYSQSQRKRMKKLHWISHMVTRLQSREGLINKFVGRYIYSHTGNSTFYLTGKMIAQGPVLNYLSTPKEIEIGLRASFDQYGKDGGDMPWKTTIMFIALLTIVVLIYSFI.

FAD contacts are provided by Arg27, Asp227, and Ala240. Asn320 carries N-linked (GlcNAc...) asparagine glycosylation. Residues 365 to 385 (WKTTIMFIALLTIVVLIYSFI) form a helical membrane-spanning segment.

The protein belongs to the paxM FAD-dependent monooxygenase family. It depends on FAD as a cofactor.

It localises to the membrane. It functions in the pathway secondary metabolite biosynthesis; terpenoid biosynthesis. The protein operates within mycotoxin biosynthesis. Functionally, FAD-dependent monooxygenase; part of the gene cluster that mediates the biosynthesis of the neurotoxin verrucosidin, a methylated alpha-pyrone polyketide that inhibits oxidative phosphorylation in mitochondria and thereby causes neurological diseases. The carbon backbone of verrucosidin is synthesized by the HR-PKS verA, and further modified by the other verrucodidin cluster enzymes. The protein is FAD-dependent monooxygenase verC2 of Penicillium polonicum.